The sequence spans 152 residues: Ribosome maturation factor RimP (152 aa).

It belongs to the RimP family.

It is found in the cytoplasm. Required for maturation of 30S ribosomal subunits. The sequence is that of Ribosome maturation factor RimP from Pseudothermotoga lettingae (strain ATCC BAA-301 / DSM 14385 / NBRC 107922 / TMO) (Thermotoga lettingae).